Here is a 341-residue protein sequence, read N- to C-terminus: DNA-directed RNA polymerase subunit alpha (341 aa).

Residues 1 to 233 (MVREEVAGST…DLFLPFLHAE (233 aa)) form an alpha N-terminal domain (alpha-NTD) region. Residues 269-341 (IPLNCIFIDQ…IDLLKNKLSF (73 aa)) form an alpha C-terminal domain (alpha-CTD) region.

It belongs to the RNA polymerase alpha chain family. In terms of assembly, in plastids the minimal PEP RNA polymerase catalytic core is composed of four subunits: alpha, beta, beta', and beta''. When a (nuclear-encoded) sigma factor is associated with the core the holoenzyme is formed, which can initiate transcription.

Its subcellular location is the plastid. The protein resides in the chloroplast. It carries out the reaction RNA(n) + a ribonucleoside 5'-triphosphate = RNA(n+1) + diphosphate. Functionally, DNA-dependent RNA polymerase catalyzes the transcription of DNA into RNA using the four ribonucleoside triphosphates as substrates. The chain is DNA-directed RNA polymerase subunit alpha from Lolium perenne (Perennial ryegrass).